We begin with the raw amino-acid sequence, 169 residues long: Cell division inhibitor SulA (169 aa).

The interval Ala106–Tyr112 is ftsZ binding. The interval Lys162–His169 is lon protease binding.

This sequence belongs to the SulA family. In terms of assembly, interacts with FtsZ. Is rapidly cleaved and degraded by the Lon protease once DNA damage is repaired.

In terms of biological role, component of the SOS system and an inhibitor of cell division. Accumulation of SulA causes rapid cessation of cell division and the appearance of long, non-septate filaments. In the presence of GTP, binds a polymerization-competent form of FtsZ in a 1:1 ratio, thus inhibiting FtsZ polymerization and therefore preventing it from participating in the assembly of the Z ring. This mechanism prevents the premature segregation of damaged DNA to daughter cells during cell division. The polypeptide is Cell division inhibitor SulA (Salmonella gallinarum (strain 287/91 / NCTC 13346)).